The chain runs to 474 residues: tRNA-2-methylthio-N(6)-dimethylallyladenosine synthase (474 aa).

Residues 3–120 (KKLHIKTWGC…LPEMINSVRG (118 aa)) enclose the MTTase N-terminal domain. Residues C12, C49, C83, C157, C161, and C164 each contribute to the [4Fe-4S] cluster site. The Radical SAM core domain maps to 143 to 375 (RAEGPTAFVS…QERINQQAMA (233 aa)). One can recognise a TRAM domain in the interval 378-441 (RRMLGTTQRI…PNSLRGKVVR (64 aa)).

This sequence belongs to the methylthiotransferase family. MiaB subfamily. In terms of assembly, monomer. It depends on [4Fe-4S] cluster as a cofactor.

It localises to the cytoplasm. The catalysed reaction is N(6)-dimethylallyladenosine(37) in tRNA + (sulfur carrier)-SH + AH2 + 2 S-adenosyl-L-methionine = 2-methylsulfanyl-N(6)-dimethylallyladenosine(37) in tRNA + (sulfur carrier)-H + 5'-deoxyadenosine + L-methionine + A + S-adenosyl-L-homocysteine + 2 H(+). Its function is as follows. Catalyzes the methylthiolation of N6-(dimethylallyl)adenosine (i(6)A), leading to the formation of 2-methylthio-N6-(dimethylallyl)adenosine (ms(2)i(6)A) at position 37 in tRNAs that read codons beginning with uridine. The protein is tRNA-2-methylthio-N(6)-dimethylallyladenosine synthase of Shigella boydii serotype 4 (strain Sb227).